We begin with the raw amino-acid sequence, 238 residues long: Uridylate kinase (238 aa).

ATP is bound at residue 12 to 15 (KLSG). Glycine 54 lines the UMP pocket. Glycine 55 and arginine 59 together coordinate ATP. UMP is bound by residues aspartate 74 and 135 to 142 (TGNPFFTT). The ATP site is built by threonine 162, tyrosine 168, and aspartate 171.

It belongs to the UMP kinase family. In terms of assembly, homohexamer.

The protein localises to the cytoplasm. The enzyme catalyses UMP + ATP = UDP + ADP. Its pathway is pyrimidine metabolism; CTP biosynthesis via de novo pathway; UDP from UMP (UMPK route): step 1/1. Its activity is regulated as follows. Inhibited by UTP. In terms of biological role, catalyzes the reversible phosphorylation of UMP to UDP. In Bordetella bronchiseptica (strain ATCC BAA-588 / NCTC 13252 / RB50) (Alcaligenes bronchisepticus), this protein is Uridylate kinase.